The sequence spans 442 residues: C4-dicarboxylate transport protein (442 aa).

8 helical membrane passes run 19-39 (QLYF…HFEP), 55-75 (LVKM…IAGM), 90-110 (AYFL…AHVV), 161-181 (ILQV…VGDA), 199-219 (LVGI…AFTI), 232-252 (WLVG…LGFV), 318-338 (IYMT…LTLG), and 366-386 (AATL…ILGV).

The protein belongs to the dicarboxylate/amino acid:cation symporter (DAACS) (TC 2.A.23) family.

Its subcellular location is the cell inner membrane. In terms of biological role, responsible for the transport of dicarboxylates such as succinate, fumarate, and malate from the periplasm across the membrane. The polypeptide is C4-dicarboxylate transport protein (Delftia acidovorans (strain DSM 14801 / SPH-1)).